The sequence spans 1611 residues: Pentafunctional AROM polypeptide (1611 aa).

The tract at residues 1–406 (MSQVSGGKVP…VEERASTVSD (406 aa)) is 3-dehydroquinate synthase. Residues 64-66 (DTN), 97-100 (EESK), 128-130 (GGV), and Asp-133 contribute to the NAD(+) site. 7-phospho-2-dehydro-3-deoxy-D-arabino-heptonate is bound at residue Arg-144. 153 to 154 (TT) is a binding site for NAD(+). Positions 160 and 166 each coordinate 7-phospho-2-dehydro-3-deoxy-D-arabino-heptonate. Lys-175 provides a ligand contact to NAD(+). A 7-phospho-2-dehydro-3-deoxy-D-arabino-heptonate-binding site is contributed by Asn-176. NAD(+) contacts are provided by residues 193–196 (WLLT) and Asn-204. Glu-208 lines the Zn(2+) pocket. Residues 208-211 (EVIK) and Lys-272 each bind 7-phospho-2-dehydro-3-deoxy-D-arabino-heptonate. The active-site Proton acceptor; for 3-dehydroquinate synthase activity is Glu-282. 7-phospho-2-dehydro-3-deoxy-D-arabino-heptonate is bound by residues 286–290 (RNLVN) and His-293. His-293 is a binding site for Zn(2+). Residue His-297 is the Proton acceptor; for 3-dehydroquinate synthase activity of the active site. 7-phospho-2-dehydro-3-deoxy-D-arabino-heptonate is bound by residues His-309 and Lys-378. Position 309 (His-309) interacts with Zn(2+). Residues 419–882 (VRESVSAPRP…WDVLGGPLNV (464 aa)) are EPSP synthase. Cys-864 acts as the For EPSP synthase activity in catalysis. The shikimate kinase stretch occupies residues 915–1092 (DASIVLIGMR…VPISPAFFLS (178 aa)). Residue 922–929 (GMRASGKS) coordinates ATP. The tract at residues 1093-1309 (LTFPRVQDAW…AAPGQMSVRD (217 aa)) is 3-dehydroquinase. The active-site Proton acceptor; for 3-dehydroquinate dehydratase activity is the His-1212. Catalysis depends on Lys-1240, which acts as the Schiff-base intermediate with substrate; for 3-dehydroquinate dehydratase activity. The shikimate dehydrogenase stretch occupies residues 1322-1611 (KRHFFLFGSP…AAYRAAAASM (290 aa)).

It in the N-terminal section; belongs to the sugar phosphate cyclases superfamily. Dehydroquinate synthase family. In the 2nd section; belongs to the EPSP synthase family. This sequence in the 3rd section; belongs to the shikimate kinase family. The protein in the 4th section; belongs to the type-I 3-dehydroquinase family. It in the C-terminal section; belongs to the shikimate dehydrogenase family. Homodimer. It depends on Zn(2+) as a cofactor.

The protein localises to the cytoplasm. It carries out the reaction 7-phospho-2-dehydro-3-deoxy-D-arabino-heptonate = 3-dehydroquinate + phosphate. It catalyses the reaction 3-dehydroquinate = 3-dehydroshikimate + H2O. The catalysed reaction is shikimate + NADP(+) = 3-dehydroshikimate + NADPH + H(+). The enzyme catalyses shikimate + ATP = 3-phosphoshikimate + ADP + H(+). It carries out the reaction 3-phosphoshikimate + phosphoenolpyruvate = 5-O-(1-carboxyvinyl)-3-phosphoshikimate + phosphate. It functions in the pathway metabolic intermediate biosynthesis; chorismate biosynthesis; chorismate from D-erythrose 4-phosphate and phosphoenolpyruvate: step 2/7. Its pathway is metabolic intermediate biosynthesis; chorismate biosynthesis; chorismate from D-erythrose 4-phosphate and phosphoenolpyruvate: step 3/7. The protein operates within metabolic intermediate biosynthesis; chorismate biosynthesis; chorismate from D-erythrose 4-phosphate and phosphoenolpyruvate: step 4/7. It participates in metabolic intermediate biosynthesis; chorismate biosynthesis; chorismate from D-erythrose 4-phosphate and phosphoenolpyruvate: step 5/7. It functions in the pathway metabolic intermediate biosynthesis; chorismate biosynthesis; chorismate from D-erythrose 4-phosphate and phosphoenolpyruvate: step 6/7. Functionally, the AROM polypeptide catalyzes 5 consecutive enzymatic reactions in prechorismate polyaromatic amino acid biosynthesis. The chain is Pentafunctional AROM polypeptide from Malassezia globosa (strain ATCC MYA-4612 / CBS 7966) (Dandruff-associated fungus).